The sequence spans 902 residues: Inter-alpha-trypsin inhibitor heavy chain H1 (902 aa).

The N-terminal stretch at 1 to 28 (MDGTMGLQGLLCLCLASHLALQAMPTQG) is a signal peptide. The VIT domain occupies 29 to 158 (SPTDSTKGNK…KATFQLTYEE (130 aa)). Cysteine 52 carries S-linked (Hex...) cysteine glycosylation. An N-linked (GlcNAc...) asparagine glycan is attached at asparagine 69. Position 121 is a phosphoserine (serine 121). The N-linked (GlcNAc...) asparagine glycan is linked to asparagine 277. Residues 282–442 (NKNVVFVIDI…WNFLEVRALE (161 aa)) enclose the VWFA domain. Phosphothreonine is present on residues threonine 394 and threonine 399. Residues 637–651 (SASQPSPTHPSSSIQ) are compositionally biased toward polar residues. A disordered region spans residues 637-656 (SASQPSPTHPSSSIQKLPDR). A glycan (O-linked (GalNAc...) serine) is linked at serine 639. Residue threonine 644 is glycosylated (O-linked (GalNAc...) threonine). Aspartate 663 carries the aspartate 1-(chondroitin 4-sulfate)-ester modification. The propeptide occupies 664–902 (PHFIIRVPQK…HTDYIVPDIF (239 aa)). Asparagine 741 carries N-linked (GlcNAc...) asparagine glycosylation.

Belongs to the ITIH family. I-alpha-I plasma protease inhibitors are assembled from one or two heavy chains (HC) and one light chain, bikunin. Inter-alpha-inhibitor (I-alpha-I) is composed of ITIH1/HC1, ITIH2/HC2 and bikunin. Interacts with TNFAIP6 (via Link and CUB domains). Heavy chains are linked to bikunin via chondroitin 4-sulfate esterified to the alpha-carboxyl of the C-terminal aspartate after propeptide cleavage. Post-translationally, the S-linked glycan is composed of two 6-carbon sugars, possibly Glc or Gal.

It localises to the secreted. May act as a carrier of hyaluronan in serum or as a binding protein between hyaluronan and other matrix protein, including those on cell surfaces in tissues to regulate the localization, synthesis and degradation of hyaluronan which are essential to cells undergoing biological processes. In Sus scrofa (Pig), this protein is Inter-alpha-trypsin inhibitor heavy chain H1 (ITIH1).